Reading from the N-terminus, the 51-residue chain is Sperm protamine P1 (51 aa).

The protein belongs to the protamine P1 family. As to expression, testis.

The protein resides in the nucleus. It localises to the chromosome. Functionally, protamines substitute for histones in the chromatin of sperm during the haploid phase of spermatogenesis. They compact sperm DNA into a highly condensed, stable and inactive complex. In Macaca mulatta (Rhesus macaque), this protein is Sperm protamine P1 (PRM1).